Consider the following 254-residue polypeptide: 5'-nucleotidase SurE (254 aa).

Residues D8, D9, S38, and N91 each coordinate a divalent metal cation.

It belongs to the SurE nucleotidase family. A divalent metal cation serves as cofactor.

It localises to the cytoplasm. The catalysed reaction is a ribonucleoside 5'-phosphate + H2O = a ribonucleoside + phosphate. Functionally, nucleotidase that shows phosphatase activity on nucleoside 5'-monophosphates. This chain is 5'-nucleotidase SurE, found in Anaeromyxobacter dehalogenans (strain 2CP-C).